The following is a 541-amino-acid chain: Chaperonin GroEL 2 (541 aa).

ATP is bound by residues 29 to 32, 86 to 90, Gly413, 476 to 478, and Asp492; these read TLGP, DGTTT, and NAA.

The protein belongs to the chaperonin (HSP60) family. Forms a cylinder of 14 subunits composed of two heptameric rings stacked back-to-back. Interacts with the co-chaperonin GroES.

It localises to the secreted. The protein resides in the capsule. The protein localises to the cell surface. It is found in the cell wall. The enzyme catalyses ATP + H2O + a folded polypeptide = ADP + phosphate + an unfolded polypeptide.. Its function is as follows. Together with its co-chaperonin GroES, plays an essential role in assisting protein folding. The GroEL-GroES system forms a nano-cage that allows encapsulation of the non-native substrate proteins and provides a physical environment optimized to promote and accelerate protein folding. In Mycolicibacterium gilvum (strain PYR-GCK) (Mycobacterium gilvum (strain PYR-GCK)), this protein is Chaperonin GroEL 2.